A 292-amino-acid polypeptide reads, in one-letter code: ATP synthase gamma chain (292 aa).

It belongs to the ATPase gamma chain family. F-type ATPases have 2 components, CF(1) - the catalytic core - and CF(0) - the membrane proton channel. CF(1) has five subunits: alpha(3), beta(3), gamma(1), delta(1), epsilon(1). CF(0) has three main subunits: a, b and c.

The protein resides in the cell inner membrane. Produces ATP from ADP in the presence of a proton gradient across the membrane. The gamma chain is believed to be important in regulating ATPase activity and the flow of protons through the CF(0) complex. The protein is ATP synthase gamma chain of Rhodopseudomonas palustris (strain BisB18).